A 440-amino-acid polypeptide reads, in one-letter code: Xaa-Pro dipeptidase (440 aa).

Positions 244, 255, 336, 381, and 420 each coordinate Mn(2+).

This sequence belongs to the peptidase M24B family. Bacterial-type prolidase subfamily. Mn(2+) is required as a cofactor.

It catalyses the reaction Xaa-L-Pro dipeptide + H2O = an L-alpha-amino acid + L-proline. Its function is as follows. Splits dipeptides with a prolyl residue in the C-terminal position. This is Xaa-Pro dipeptidase from Pseudoalteromonas translucida (strain TAC 125).